Consider the following 257-residue polypeptide: MSQIEFKDVSKVYPNGHVGLKDINLNIEKGDFAVIVGLSGAGKSTLLRSVNRLHDISKGDITIEGQSITKARGKKLLEMRRSIGMIFQHFNLVKRSTVLRNVLSGRVGYHPTWKMILGLFPKEDKVKALDALERVNILDKYDQRSDQLSGGQQQRISIARALCQEPTIILADEPVASLDPLTTKQVMDDLKKINEELGITILINLHFVDLAKEYGSRIIGLRAGELVYDGPASEANDEVFNHIYGRSIKDDEKLGVE.

The 245-residue stretch at 4–248 (IEFKDVSKVY…VFNHIYGRSI (245 aa)) folds into the ABC transporter domain.

This sequence belongs to the ABC transporter superfamily. Phosphonates importer (TC 3.A.1.9.1) family. The complex is composed of two ATP-binding proteins (PhnC), two transmembrane proteins (PhnE) and a solute-binding protein (PhnD).

It localises to the cell membrane. The enzyme catalyses phosphonate(out) + ATP + H2O = phosphonate(in) + ADP + phosphate + H(+). Functionally, part of the ABC transporter complex PhnCDE involved in phosphonates import. Responsible for energy coupling to the transport system. In Staphylococcus epidermidis (strain ATCC 35984 / DSM 28319 / BCRC 17069 / CCUG 31568 / BM 3577 / RP62A), this protein is Phosphonates import ATP-binding protein PhnC.